The following is a 219-amino-acid chain: Large ribosomal subunit protein uL3 (219 aa).

Residues 113 to 142 (TTKGHGYQGNIHKDNQSRGPMAHGSRYHRR) are disordered.

Belongs to the universal ribosomal protein uL3 family. As to quaternary structure, part of the 50S ribosomal subunit. Forms a cluster with proteins L14 and L19.

In terms of biological role, one of the primary rRNA binding proteins, it binds directly near the 3'-end of the 23S rRNA, where it nucleates assembly of the 50S subunit. This Limosilactobacillus reuteri (strain DSM 20016) (Lactobacillus reuteri) protein is Large ribosomal subunit protein uL3.